The primary structure comprises 199 residues: Protein MA_3591 (199 aa).

The AMMECR1 domain occupies 5-196 (TEGRVAVKLA…EKEPEGEVIE (192 aa)).

The polypeptide is Protein MA_3591 (Methanosarcina acetivorans (strain ATCC 35395 / DSM 2834 / JCM 12185 / C2A)).